The following is a 325-amino-acid chain: NADH-cytochrome b5 reductase 2 (325 aa).

Residues 32 to 48 (VPLYGGLALAAGGAYYY) traverse the membrane as a helical segment. Residues 74 to 179 (QGWVDLKLAG…KGPIPKYPWE (106 aa)) enclose the FAD-binding FR-type domain. Residue 182–217 (KHDHICMIAGGTGITPMYQIIRKIFNNPNDKTKVTL) participates in FAD binding.

This sequence belongs to the flavoprotein pyridine nucleotide cytochrome reductase family. The cofactor is FAD.

The protein localises to the mitochondrion outer membrane. The catalysed reaction is 2 Fe(III)-[cytochrome b5] + NADH = 2 Fe(II)-[cytochrome b5] + NAD(+) + H(+). Functionally, may mediate the reduction of outer membrane cytochrome b5. The sequence is that of NADH-cytochrome b5 reductase 2 (MCR1) from Coccidioides immitis (strain RS) (Valley fever fungus).